A 97-amino-acid polypeptide reads, in one-letter code: MKLRPLHDRVVIRRSEEESKTAGGIVLPGSAAEKPNRGEIVAVGTGRVLDNGEVRALAVKVGDKVVFGPYSGSNTVKVDGEDLLVMAENEILAVIEG.

It belongs to the GroES chaperonin family. Heptamer of 7 subunits arranged in a ring. Interacts with the chaperonin GroEL.

It localises to the cytoplasm. Its function is as follows. Together with the chaperonin GroEL, plays an essential role in assisting protein folding. The GroEL-GroES system forms a nano-cage that allows encapsulation of the non-native substrate proteins and provides a physical environment optimized to promote and accelerate protein folding. GroES binds to the apical surface of the GroEL ring, thereby capping the opening of the GroEL channel. This Pseudomonas fluorescens (strain ATCC BAA-477 / NRRL B-23932 / Pf-5) protein is Co-chaperonin GroES.